The following is a 393-amino-acid chain: Formate-dependent phosphoribosylglycinamide formyltransferase (393 aa).

Residues 22–23 (EL) and glutamate 82 each bind N(1)-(5-phospho-beta-D-ribosyl)glycinamide. ATP-binding positions include arginine 114, lysine 155, 160-165 (SSGHGQ), 195-198 (EGFV), and glutamate 203. Positions 119-308 (RLAAEELGLP…QFALHARAVL (190 aa)) constitute an ATP-grasp domain. Residues glutamate 267 and glutamate 279 each contribute to the Mg(2+) site. Residues aspartate 286, lysine 356, and 363–364 (RR) each bind N(1)-(5-phospho-beta-D-ribosyl)glycinamide.

This sequence belongs to the PurK/PurT family. As to quaternary structure, homodimer.

The catalysed reaction is N(1)-(5-phospho-beta-D-ribosyl)glycinamide + formate + ATP = N(2)-formyl-N(1)-(5-phospho-beta-D-ribosyl)glycinamide + ADP + phosphate + H(+). Its pathway is purine metabolism; IMP biosynthesis via de novo pathway; N(2)-formyl-N(1)-(5-phospho-D-ribosyl)glycinamide from N(1)-(5-phospho-D-ribosyl)glycinamide (formate route): step 1/1. In terms of biological role, involved in the de novo purine biosynthesis. Catalyzes the transfer of formate to 5-phospho-ribosyl-glycinamide (GAR), producing 5-phospho-ribosyl-N-formylglycinamide (FGAR). Formate is provided by PurU via hydrolysis of 10-formyl-tetrahydrofolate. This is Formate-dependent phosphoribosylglycinamide formyltransferase from Parabacteroides distasonis (strain ATCC 8503 / DSM 20701 / CIP 104284 / JCM 5825 / NCTC 11152).